The chain runs to 88 residues: Small ribosomal subunit protein uS17 (88 aa).

Belongs to the universal ribosomal protein uS17 family. Part of the 30S ribosomal subunit.

One of the primary rRNA binding proteins, it binds specifically to the 5'-end of 16S ribosomal RNA. In Prochlorococcus marinus (strain MIT 9515), this protein is Small ribosomal subunit protein uS17.